The sequence spans 491 residues: Delayed-rectifier potassium channel regulatory subunit KCNS3 (491 aa).

Residues 1–182 are Cytoplasmic-facing; sequence MVFGEFFHRP…IRMENPAYCL (182 aa). The helical transmembrane segment at 183–204 threads the bilayer; it reads SAKLIAISSLSVVLASIVAMCV. Over 205 to 220 the chain is Extracellular; that stretch reads HSMSEFQNEDGEVDDP. The chain crosses the membrane as a helical span at residues 221 to 243; sequence VLEGVEIACIAWFTGELAIRLVA. Over 244-254 the chain is Cytoplasmic; the sequence is APSQKKFWKNP. Residues 255 to 275 form a helical membrane-spanning segment; the sequence is LNIIDFVSIIPFYATLAVDTK. Topologically, residues 276–285 are extracellular; it reads EEESEDIENM. A helical; Voltage-sensor membrane pass occupies residues 286–306; it reads GKVVQILRLMRIFRILKLARH. Topologically, residues 307-321 are cytoplasmic; the sequence is SVGLRSLGATLRHSY. A helical membrane pass occupies residues 322–343; the sequence is HEVGLLLLFLSVGISIFSVLIY. Topologically, residues 344-357 are extracellular; sequence SVEKDELASSLTSI. Residues 358–369 constitute an intramembrane region (helical); that stretch reads PICWWWATISMT. The Selectivity filter motif lies at 370 to 375; sequence TVGYGD. The stretch at 370-377 is an intramembrane region; sequence TVGYGDTH. Topologically, residues 378–384 are extracellular; that stretch reads PVTLAGK. A helical membrane pass occupies residues 385-413; the sequence is IIASTCIICGILVVALPITIIFNKFSKYY. The Cytoplasmic portion of the chain corresponds to 414-491; the sequence is QKQKDMDVDQ…TASLENCTAK (78 aa).

This sequence belongs to the potassium channel family. S (TC 1.A.1.2) subfamily. Kv9.3/KCNS3 sub-subfamily. In terms of assembly, heterotetramer with KCNB1. Does not form homomultimers. In terms of tissue distribution, expressed in myocytes. Detected in lung, spleen, brain and heart.

The protein localises to the cell membrane. Potassium channel regulatory subunit that modulates the delayed rectifier potassium channel activity of KCNB1 by namely slowing down the deactivation and inactivation time constants. While it does not form functional channel on its own, it can form functional heterotetrameric channels with KCNB1. The protein is Delayed-rectifier potassium channel regulatory subunit KCNS3 of Rattus norvegicus (Rat).